The sequence spans 47 residues: MPFEEAMKRLFMKKICMRCNARNPWRATKCRKCGYKGLRPKAKEPRG.

This sequence belongs to the eukaryotic ribosomal protein eL40 family.

The sequence is that of Large ribosomal subunit protein eL40 from Methanocaldococcus jannaschii (strain ATCC 43067 / DSM 2661 / JAL-1 / JCM 10045 / NBRC 100440) (Methanococcus jannaschii).